A 212-amino-acid chain; its full sequence is Adenylate kinase (212 aa).

10–15 is an ATP binding site; it reads GAGKGT. Residues 30–59 are NMP; it reads STGDMFRAAMANQTEMGVLAKSYIDKGELV. AMP contacts are provided by residues Thr31, Arg36, 57 to 59, 86 to 89, and Gln93; these read ELV and GYPR. Residues 127–159 are LID; it reads GRIIHRVTGETFHKVFNPPVDYKEEDYYQREDD. Residues Arg128 and 137 to 138 contribute to the ATP site; that span reads TF. Residues Arg156 and Arg167 each contribute to the AMP site. ATP is bound at residue Gln195.

Belongs to the adenylate kinase family. As to quaternary structure, monomer.

The protein resides in the cytoplasm. The enzyme catalyses AMP + ATP = 2 ADP. The protein operates within purine metabolism; AMP biosynthesis via salvage pathway; AMP from ADP: step 1/1. Catalyzes the reversible transfer of the terminal phosphate group between ATP and AMP. Plays an important role in cellular energy homeostasis and in adenine nucleotide metabolism. The protein is Adenylate kinase of Streptococcus pneumoniae serotype 4 (strain ATCC BAA-334 / TIGR4).